A 97-amino-acid polypeptide reads, in one-letter code: Small ribosomal subunit protein bS6 (97 aa).

This sequence belongs to the bacterial ribosomal protein bS6 family.

In terms of biological role, binds together with bS18 to 16S ribosomal RNA. In Limosilactobacillus fermentum (strain NBRC 3956 / LMG 18251) (Lactobacillus fermentum), this protein is Small ribosomal subunit protein bS6.